We begin with the raw amino-acid sequence, 267 residues long: Hydroxyethylthiazole kinase 2 (267 aa).

Position 41 (Met-41) interacts with substrate. Lys-116 and Thr-166 together coordinate ATP. Residue Gly-193 coordinates substrate.

It belongs to the Thz kinase family. The cofactor is Mg(2+).

The enzyme catalyses 5-(2-hydroxyethyl)-4-methylthiazole + ATP = 4-methyl-5-(2-phosphooxyethyl)-thiazole + ADP + H(+). It functions in the pathway cofactor biosynthesis; thiamine diphosphate biosynthesis; 4-methyl-5-(2-phosphoethyl)-thiazole from 5-(2-hydroxyethyl)-4-methylthiazole: step 1/1. In terms of biological role, catalyzes the phosphorylation of the hydroxyl group of 4-methyl-5-beta-hydroxyethylthiazole (THZ). The sequence is that of Hydroxyethylthiazole kinase 2 from Streptococcus pneumoniae (strain P1031).